The chain runs to 180 residues: Large ribosomal subunit protein uL5 (180 aa).

This sequence belongs to the universal ribosomal protein uL5 family. Part of the 50S ribosomal subunit; part of the 5S rRNA/L5/L18/L25 subcomplex. Contacts the 5S rRNA and the P site tRNA. Forms a bridge to the 30S subunit in the 70S ribosome.

In terms of biological role, this is one of the proteins that bind and probably mediate the attachment of the 5S RNA into the large ribosomal subunit, where it forms part of the central protuberance. In the 70S ribosome it contacts protein S13 of the 30S subunit (bridge B1b), connecting the 2 subunits; this bridge is implicated in subunit movement. Contacts the P site tRNA; the 5S rRNA and some of its associated proteins might help stabilize positioning of ribosome-bound tRNAs. The chain is Large ribosomal subunit protein uL5 from Streptococcus pyogenes serotype M1.